Consider the following 107-residue polypeptide: Thioredoxin (107 aa).

One can recognise a Thioredoxin domain in the interval 2–107 (SVSQVTDASF…LASTLNKYIS (106 aa)). Catalysis depends on nucleophile residues C31 and C34. The cysteines at positions 31 and 34 are disulfide-linked.

Belongs to the thioredoxin family.

It localises to the plastid. It is found in the chloroplast. Participates in various redox reactions through the reversible oxidation of its active center dithiol to a disulfide and catalyzes dithiol-disulfide exchange reactions. This is Thioredoxin (trxA) from Pyropia yezoensis (Susabi-nori).